Reading from the N-terminus, the 388-residue chain is DNA primase small subunit PriS (388 aa).

Catalysis depends on residues Asp-100, Asp-102, and Asp-288.

This sequence belongs to the eukaryotic-type primase small subunit family. In terms of assembly, heterodimer of a small subunit (PriS) and a large subunit (PriL). Mg(2+) serves as cofactor. The cofactor is Mn(2+).

Its function is as follows. Catalytic subunit of DNA primase, an RNA polymerase that catalyzes the synthesis of short RNA molecules used as primers for DNA polymerase during DNA replication. The small subunit contains the primase catalytic core and has DNA synthesis activity on its own. Binding to the large subunit stabilizes and modulates the activity, increasing the rate of DNA synthesis while decreasing the length of the DNA fragments, and conferring RNA synthesis capability. The DNA polymerase activity may enable DNA primase to also catalyze primer extension after primer synthesis. May also play a role in DNA repair. The chain is DNA primase small subunit PriS from Methanospirillum hungatei JF-1 (strain ATCC 27890 / DSM 864 / NBRC 100397 / JF-1).